Here is an 820-residue protein sequence, read N- to C-terminus: MSDTRRRVKVYTLNEDRQWDDRGTGHVSSTYVEELKGMSLLVRAESDGSLLLESKINPNTAYQKQQDTLIVWSEAENYDLALSFQEKAGCDEIWEKICQVQGKDPSVEVTQDLIDESEEERFEEMPETSHLIDLPACELSKLEEIADLVTSVLSSPIRREKLALALENEGYIKKLLQLFQACENLENTEGLHHLYEIIRGILFLNKATLFEVMFSDECIMDVVGCLEYDPALAQPKRHREFLTKTAKFKEVIPITDSELRQKIHQTYRVQYIQDIILPTPSVFEENFLSTLTSFIFFNKVEIVSMLQEDEKFLSEVFAQLTDEATDDDKRRELVNFFKEFCAFSQTLQPQNRDAFFKTLAKLGILPALEIVMGMDDLQVRSAATDIFSYLVEFSPSMVREFVMQEAQQSDDDVLLINVVIEQMICDTDPELGGAVQLMGLLRTLIDPENMLATTNKTEKSEFLNFFYNHCMHVLTAPLLTNTSEDKCEKDNMLGSNTTNTICPDNYQTAQLLALILELLTFCVEHHTYHIKNYIMNKDLLRRVLVLMNSKHTFLALCALRFMRRIIGLKDEFYNRYITKGNLFEPVINALLDNGTRYNLLNSAVIELFEFIRVEDIKSLTAHIVENFYKALESIEYVQTFKGLKTKYEQEKDRQNQKLNSVPSILRSNRFRRDAKALEEDEEMWFNEDDDEEGKAVITPVEKSKTEDDFPDSYEKFMETKKAKESEDKENLPKRASSGGFKFTFSHSPSATNGTNSTNSKSVVSQTTPASSNVASSKTTSLATSVTATKGNLVGLVDYPDDEEEDEEEESSPRKRPRLGS.

The 100-residue stretch at 1-100 folds into the WH1 domain; that stretch reads MSDTRRRVKV…DEIWEKICQV (100 aa). Phosphoserine is present on residues S117 and S663. The tract at residues 687-820 is disordered; it reads EDDDEEGKAV…SPRKRPRLGS (134 aa). The span at 701–732 shows a compositional bias: basic and acidic residues; sequence EKSKTEDDFPDSYEKFMETKKAKESEDKENLP. Polar residues predominate over residues 744-789; it reads FSHSPSATNGTNSTNSKSVVSQTTPASSNVASSKTTSLATSVTATK. Acidic residues predominate over residues 798–809; that stretch reads YPDDEEEDEEEE. S811 bears the Phosphoserine mark.

The protein belongs to the SMEK family. In terms of assembly, serine/threonine-protein phosphatase 4 (PP4) occurs in different assemblies of the catalytic and one or more regulatory subunits. Component of the PP4 complex PPP4C-PPP4R2-PPP4R3B.

Its subcellular location is the cytoplasm. It is found in the cytoskeleton. The protein localises to the microtubule organizing center. The protein resides in the centrosome. It localises to the nucleus. Its function is as follows. Regulatory subunit of serine/threonine-protein phosphatase 4 (PP4). May regulate the activity of PPP4C at centrosomal microtubule organizing centers. This is Serine/threonine-protein phosphatase 4 regulatory subunit 3B from Mus musculus (Mouse).